The chain runs to 538 residues: Bifunctional purine biosynthesis protein PurH (538 aa).

In terms of domain architecture, MGS-like spans 8–158 (IPAPDKVEIK…KNHAYVTILT (151 aa)).

It belongs to the PurH family.

It catalyses the reaction (6R)-10-formyltetrahydrofolate + 5-amino-1-(5-phospho-beta-D-ribosyl)imidazole-4-carboxamide = 5-formamido-1-(5-phospho-D-ribosyl)imidazole-4-carboxamide + (6S)-5,6,7,8-tetrahydrofolate. It carries out the reaction IMP + H2O = 5-formamido-1-(5-phospho-D-ribosyl)imidazole-4-carboxamide. The protein operates within purine metabolism; IMP biosynthesis via de novo pathway; 5-formamido-1-(5-phospho-D-ribosyl)imidazole-4-carboxamide from 5-amino-1-(5-phospho-D-ribosyl)imidazole-4-carboxamide (10-formyl THF route): step 1/1. It functions in the pathway purine metabolism; IMP biosynthesis via de novo pathway; IMP from 5-formamido-1-(5-phospho-D-ribosyl)imidazole-4-carboxamide: step 1/1. In Rhizobium etli (strain CIAT 652), this protein is Bifunctional purine biosynthesis protein PurH.